A 179-amino-acid chain; its full sequence is Translation initiation factor IF-3 (179 aa).

Belongs to the IF-3 family. Monomer.

The protein localises to the cytoplasm. Its function is as follows. IF-3 binds to the 30S ribosomal subunit and shifts the equilibrium between 70S ribosomes and their 50S and 30S subunits in favor of the free subunits, thus enhancing the availability of 30S subunits on which protein synthesis initiation begins. In Treponema pallidum (strain Nichols), this protein is Translation initiation factor IF-3.